The following is a 236-amino-acid chain: MLYTNNYNIPKIIIALDFYNKKEAMTLVDLLDPSVFYLKIGKEMFTILGFKFVKELHKLGFNVFLDLKFHDIPNTVFNATKAAADLGIWMLSVHASGGKNMLLSAKKALKSFKKPPLLIAVTMLTSLKEKDLKEIGIKISLKDYILILSKLSNDCGLDGIVCPGNQAKKIKSLYGDKYKIITPGIRLSSDSSFDQKHIITPKEAKEFQIDYIVIGRSITTSKNPIKKLNLIIESMR.

Substrate-binding positions include aspartate 17, lysine 39, 66-75 (DLKFHDIPNT), threonine 125, arginine 186, glutamine 195, glycine 215, and arginine 216. Residue lysine 68 is the Proton donor of the active site.

Belongs to the OMP decarboxylase family. Type 1 subfamily. In terms of assembly, homodimer.

The catalysed reaction is orotidine 5'-phosphate + H(+) = UMP + CO2. Its pathway is pyrimidine metabolism; UMP biosynthesis via de novo pathway; UMP from orotate: step 2/2. Catalyzes the decarboxylation of orotidine 5'-monophosphate (OMP) to uridine 5'-monophosphate (UMP). In Buchnera aphidicola subsp. Schizaphis graminum (strain Sg), this protein is Orotidine 5'-phosphate decarboxylase.